A 959-amino-acid polypeptide reads, in one-letter code: DNA translocase FtsK 1 (959 aa).

Transmembrane regions (helical) follow at residues M1–V21, I39–G59, and G83–F103. The Cytoplasmic portion of the chain corresponds to G104–D959. The disordered stretch occupies residues P122–A427. Over residues D126–L136 the composition is skewed to basic and acidic residues. Composition is skewed to low complexity over residues A220–P229 and A264–A286. Over residues S287 to P298 the composition is skewed to pro residues. Residues P333–A379 show a composition bias toward acidic residues. Residues E380–P403 show a composition bias toward low complexity. The 210-residue stretch at G605–R814 folds into the FtsK domain. G625–V630 provides a ligand contact to ATP.

The protein belongs to the FtsK/SpoIIIE/SftA family. In terms of assembly, homohexamer. Forms a ring that surrounds DNA.

It is found in the cell inner membrane. Essential cell division protein that coordinates cell division and chromosome segregation. The N-terminus is involved in assembly of the cell-division machinery. The C-terminus functions as a DNA motor that moves dsDNA in an ATP-dependent manner towards the dif recombination site, which is located within the replication terminus region. Translocation stops specifically at Xer-dif sites, where FtsK interacts with the Xer recombinase, allowing activation of chromosome unlinking by recombination. FtsK orienting polar sequences (KOPS) guide the direction of DNA translocation. FtsK can remove proteins from DNA as it translocates, but translocation stops specifically at XerCD-dif site, thereby preventing removal of XerC and XerD from dif. This is DNA translocase FtsK 1 (ftsK1) from Ralstonia nicotianae (strain ATCC BAA-1114 / GMI1000) (Ralstonia solanacearum).